Reading from the N-terminus, the 240-residue chain is Peptidyl-tRNA hydrolase 2 (240 aa).

Tyr60 is a binding site for tRNA. The active-site Proton acceptor is His65. TRNA is bound by residues Tyr111, Asn113, and Asn159.

This sequence belongs to the PTH family. Monomer.

It localises to the cytoplasm. The enzyme catalyses an N-acyl-L-alpha-aminoacyl-tRNA + H2O = an N-acyl-L-amino acid + a tRNA + H(+). Hydrolyzes ribosome-free peptidyl-tRNAs (with 1 or more amino acids incorporated), which drop off the ribosome during protein synthesis, or as a result of ribosome stalling. Functionally, catalyzes the release of premature peptidyl moieties from peptidyl-tRNA molecules trapped in stalled 50S ribosomal subunits, and thus maintains levels of free tRNAs and 50S ribosomes. This Corynebacterium jeikeium (strain K411) protein is Peptidyl-tRNA hydrolase 2.